Consider the following 175-residue polypeptide: Large ribosomal subunit protein uL6 (175 aa).

The protein belongs to the universal ribosomal protein uL6 family. In terms of assembly, part of the 50S ribosomal subunit.

In terms of biological role, this protein binds to the 23S rRNA, and is important in its secondary structure. It is located near the subunit interface in the base of the L7/L12 stalk, and near the tRNA binding site of the peptidyltransferase center. This Xylella fastidiosa (strain 9a5c) protein is Large ribosomal subunit protein uL6.